The following is a 201-amino-acid chain: Recombination protein RecR (201 aa).

The C4-type zinc-finger motif lies at 60-75 (CSRCGNVDTVDPCTVC). Residues 83 to 178 (SVIIVVEDVA…KITRLAHGVP (96 aa)) enclose the Toprim domain.

Belongs to the RecR family.

May play a role in DNA repair. It seems to be involved in an RecBC-independent recombinational process of DNA repair. It may act with RecF and RecO. The protein is Recombination protein RecR of Rhizobium rhizogenes (strain K84 / ATCC BAA-868) (Agrobacterium radiobacter).